We begin with the raw amino-acid sequence, 341 residues long: Anthranilate phosphoribosyltransferase (341 aa).

Residues Gly-79, 82–83, Thr-87, 89–92, 107–115, and Ser-119 contribute to the 5-phospho-alpha-D-ribose 1-diphosphate site; these read GD, NIST, and KHGGRSVSS. Gly-79 lines the anthranilate pocket. Ser-91 provides a ligand contact to Mg(2+). Arg-165 is a binding site for anthranilate. Asp-224 and Glu-225 together coordinate Mg(2+).

It belongs to the anthranilate phosphoribosyltransferase family. As to quaternary structure, homodimer. Mg(2+) is required as a cofactor.

It carries out the reaction N-(5-phospho-beta-D-ribosyl)anthranilate + diphosphate = 5-phospho-alpha-D-ribose 1-diphosphate + anthranilate. It participates in amino-acid biosynthesis; L-tryptophan biosynthesis; L-tryptophan from chorismate: step 2/5. Its function is as follows. Catalyzes the transfer of the phosphoribosyl group of 5-phosphorylribose-1-pyrophosphate (PRPP) to anthranilate to yield N-(5'-phosphoribosyl)-anthranilate (PRA). This Ruminiclostridium cellulolyticum (strain ATCC 35319 / DSM 5812 / JCM 6584 / H10) (Clostridium cellulolyticum) protein is Anthranilate phosphoribosyltransferase.